A 626-amino-acid polypeptide reads, in one-letter code: Janus kinase and microtubule-interacting protein 1 (626 aa).

Residues 1–25 (MSKKGRSKGDKPEAETDSVQMANEE) are disordered. Residues 1 to 365 (MSKKGRSKGD…KLKSLTRENV (365 aa)) are mediates association with microtubules. Coiled-coil stretches lie at residues 13–255 (EAET…EAER) and 284–413 (ERDV…DDLS). Positions 365 to 626 (VEMKEKLSAQ…ILFEPKLKFM (262 aa)) are mediates interaction with TYK2 and GABBR1. Ser-382 bears the Phosphoserine mark. Polar residues predominate over residues 452–461 (ETLSETSYNT). The tract at residues 452–481 (ETLSETSYNTDRTDRTPATPEEDLDETTTR) is disordered. Thr-470 carries the post-translational modification Phosphothreonine. Positions 490–604 (QLTREYQALQ…EFRVLELEVR (115 aa)) form a coiled coil.

Belongs to the JAKMIP family. In terms of assembly, homodimer. Interacts with JAK1 and TYK2. Forms a complex with GABBR1 and KIF5B/kinesin-1. In terms of processing, phosphorylated.

It localises to the cytoplasm. Its subcellular location is the cytoskeleton. The protein resides in the membrane. Functionally, associates with microtubules and may play a role in the microtubule-dependent transport of the GABA-B receptor. May play a role in JAK1 signaling and regulate microtubule cytoskeleton rearrangements. This Mus musculus (Mouse) protein is Janus kinase and microtubule-interacting protein 1 (Jakmip1).